A 77-amino-acid polypeptide reads, in one-letter code: Conotoxin Vc6.14 (77 aa).

An N-terminal signal peptide occupies residues 1 to 19 (MEKLTILLLVAAVLMSTQA). The propeptide occupies 20-37 (MFQGGGEKRPKDKIKFLS). Intrachain disulfides connect Cys-51–Cys-65, Cys-58–Cys-69, and Cys-64–Cys-74.

The protein belongs to the conotoxin O2 superfamily. Expressed by the venom duct.

The protein localises to the secreted. In terms of biological role, inhibits voltage-gated ion channels. The protein is Conotoxin Vc6.14 of Conus victoriae (Queen Victoria cone).